A 102-amino-acid chain; its full sequence is Large ribosomal subunit protein uL24 (102 aa).

The disordered stretch occupies residues 44-65 (HAKPSQDNPQGGILNQEAPIHS).

It belongs to the universal ribosomal protein uL24 family. Part of the 50S ribosomal subunit.

One of two assembly initiator proteins, it binds directly to the 5'-end of the 23S rRNA, where it nucleates assembly of the 50S subunit. Its function is as follows. One of the proteins that surrounds the polypeptide exit tunnel on the outside of the subunit. This chain is Large ribosomal subunit protein uL24, found in Shouchella clausii (strain KSM-K16) (Alkalihalobacillus clausii).